A 2123-amino-acid chain; its full sequence is Bromodomain adjacent to zinc finger domain protein 2B (2123 aa).

7 disordered regions span residues 1–129 (MESG…VNGT), 144–306 (TPAS…LSQQ), 357–402 (PSPD…EMGK), 473–534 (NENV…HPHP), 546–691 (RGTD…RRVA), 756–793 (RAMD…GSAE), and 937–960 (ARKK…LNKE). Residues 7–46 (LPSSPASSTTPTSSSAPSVASAVSKSSLSTGAASLSSTAS) are compositionally biased toward low complexity. Residues 83 to 95 (FFPPLLGIPPLFA) are compositionally biased toward pro residues. Residues 100–116 (NHDSSFHSRTSGKSSRN) are compositionally biased toward polar residues. 2 stretches are compositionally biased toward low complexity: residues 147–157 (SSSMGQNQSTS) and 193–216 (ESSS…ISSS). A compositionally biased stretch (acidic residues) spans 217 to 243 (DSDDLEEEEEEDQSVEESEDDDSDSET). Over residues 259-277 (SDPKTDGQKATEKAQERRT) the composition is skewed to basic and acidic residues. 2 stretches are compositionally biased toward low complexity: residues 291 to 306 (PPFQ…LSQQ) and 366 to 379 (NKNT…LTSE). Over residues 473-502 (NENVSSSTPFSSPVNLSTSGRRAPGSQTPA) the composition is skewed to polar residues. Residues 546–559 (RGTDSDVPSSKDSE) show a composition bias toward basic and acidic residues. Over residues 560–587 (DSNEDEEEDDEEEDEEDDEDDESDDSQS) the composition is skewed to acidic residues. Residues 588–597 (ESDSNSQSDS) are compositionally biased toward low complexity. A compositionally biased stretch (acidic residues) spans 598–615 (EGSEDDEEKDQEESDSDT). Low complexity-rich tracts occupy residues 628-637 (SSSAKSPPSS) and 671-683 (TSSS…PHSG). The 76-residue stretch at 690–765 (VADDQELRIP…RAMDGRRGRP (76 aa)) folds into the MBD domain. Residues 756-778 (RAMDGRRGRPPNPDRPRAREESR) are compositionally biased toward basic and acidic residues. The 66-residue stretch at 1004–1069 (GTTFSDCLMV…LSAAVCDPGL (66 aa)) folds into the DDT domain. Disordered stretches follow at residues 1183–1260 (RDAS…QTAS), 1396–1444 (PPES…KTDA), 1499–1526 (TLVT…SSVQ), and 1588–1614 (FLTS…AQPV). The span at 1214–1238 (SDYDDDDDDDSDDQADEDEEDEEDK) shows a compositional bias: acidic residues. A compositionally biased stretch (basic and acidic residues) spans 1239-1248 (DDKKGKKTDI). Residues 1254 to 1281 (EGDQTASVEELEKQIEKLSKQQSQYRRK) adopt a coiled-coil conformation. Composition is skewed to polar residues over residues 1408-1422 (NVST…QNSG) and 1430-1444 (PSAT…KTDA). A compositionally biased stretch (pro residues) spans 1505 to 1515 (SQPPSKSPSPA). The segment covering 1588 to 1600 (FLTSSVASSKSDS) has biased composition (low complexity). Residues 1886 to 1936 (KVYCQICRKGDNEELLLLCDGCDKGCHTYCHRPKITTIPDGDWFCPACISK) form a PHD-type zinc finger. A disordered region spans residues 1949–2013 (VKGKKTNDSK…AESTTSIKKP (65 aa)). The segment covering 1984-1995 (GSKELKKRKMEE) has biased composition (basic and acidic residues). The span at 1996–2010 (TTSLNLSKAESTTSI) shows a compositional bias: polar residues. Residues 2015–2119 (KDESRDLALC…KYFEKKWTDT (105 aa)) enclose the Bromo domain.

It belongs to the WAL family. As to quaternary structure, component of the BRF-1 ISWI chromatin remodeling complex, at least composed of SMARCA1 and BAZ2B, which regulates the spacing of histone octamers on the DNA template to facilitate access to DNA. Within the BRF-1 ISWI chromatin remodeling complex interacts with SMARCA1; the interaction is direct. Component of the BRF-5 ISWI chromatin remodeling complex, at least composed of SMARCA5/SNF2H and BAZ2B, which regulates the spacing of histone octamers on the DNA template to facilitate access to DNA. Within the BRF-5 ISWI chromatin remodeling complex interacts with SMARCA5/SNF2H; the interaction is direct. Interacts with acetylated lysine residues on histone H1.4, H2A, H2B, H3 and H4 (in vitro). Interacts with EHMT1.

Its subcellular location is the nucleus. In terms of biological role, regulatory subunit of the ATP-dependent BRF-1 and BRF-5 ISWI chromatin remodeling complexes, which form ordered nucleosome arrays on chromatin and facilitate access to DNA during DNA-templated processes such as DNA replication, transcription, and repair. Both complexes regulate the spacing of nucleosomes along the chromatin and have the ability to slide mononucleosomes to the center of a DNA template. The BRF-1 ISWI chromatin remodeling complex has a lower ATP hydrolysis rate than the BRF-5 ISWI chromatin remodeling complex. Chromatin reader protein, involved in positively modulating the rate of age-related behavioral deterioration. Represses the expression of mitochondrial function-related genes, perhaps by occupying their promoter regions, working in concert with histone methyltransferase EHMT1. This chain is Bromodomain adjacent to zinc finger domain protein 2B, found in Mus musculus (Mouse).